The sequence spans 342 residues: Apurinic-apyrimidinic endonuclease 1 (342 aa).

Residues His61, Glu136, Asp170, His173, His207, Asp220, His222, and Glu252 each coordinate Zn(2+). The segment covering 299 to 310 (HLNKFEKKEAKK) has biased composition (basic and acidic residues). Residues 299–342 (HLNKFEKKEAKKDRKKKSKDGDQTTLLLRKKQKLGNAEVKSLDE) form a disordered region.

The protein belongs to the AP endonuclease 2 family. The cofactor is Zn(2+).

It localises to the nucleus. In terms of biological role, DNA repair enzyme that cleaves apurinic/apyrimidinic (AP) sites and removes 3'-blocking groups present at single strand breaks of damaged DNA. Provides back-up AP endonuclease (APE) activity to apn2 together with uve1. In Schizosaccharomyces pombe (strain 972 / ATCC 24843) (Fission yeast), this protein is Apurinic-apyrimidinic endonuclease 1 (apn1).